A 66-amino-acid polypeptide reads, in one-letter code: Conotoxin Lt3.5 (66 aa).

Positions 1 to 20 (MMSKLGALLTICLLLFPLTA) are cleaved as a signal peptide. Positions 21–53 (VPLDGDQPLDRHAERMHDGISPKRHPWFDPVKR) are excised as a propeptide. 3 cysteine pairs are disulfide-bonded: cysteine 54–cysteine 66, cysteine 55–cysteine 62, and cysteine 59–cysteine 65. Proline 64 is subject to 4-hydroxyproline.

Belongs to the conotoxin M superfamily. Expressed by the venom duct.

It is found in the secreted. The polypeptide is Conotoxin Lt3.5 (Conus litteratus (Lettered cone)).